Consider the following 660-residue polypeptide: Poly [ADP-ribose] polymerase 2-A (660 aa).

The 35-residue stretch at 2–36 folds into the SAP 1 domain; it reads SARLRVEELRAELQRRGLDASGNKPVLVRRLDAAI. The disordered stretch occupies residues 40–92; it reads EEEEAAVSAAAKEEADAGGVVDGEGNGEDKRKRKRRGDGEDVDNSESDAAKLE. Residues 69–75 carry the Nuclear localization signal motif; that stretch reads KRKRKRR. Residues 91–125 form the SAP 2 domain; sequence LEGMSYRELQALAKSRGLAANGSKKEVIERLLCAP. Positions 179-281 constitute a WGR domain; sequence TYHVLQVWFL…KSFECYARKY (103 aa). Positions 308–426 constitute a PARP alpha-helical domain; that stretch reads ETKLETRIAS…EIEIATKLLE (119 aa). In terms of domain architecture, PARP catalytic spans 434–660; that stretch reads DPLYARYKQL…LHVSFNFKKR (227 aa).

Belongs to the ARTD/PARP family.

It localises to the nucleus. The enzyme catalyses NAD(+) + (ADP-D-ribosyl)n-acceptor = nicotinamide + (ADP-D-ribosyl)n+1-acceptor + H(+).. It catalyses the reaction L-aspartyl-[protein] + NAD(+) = 4-O-(ADP-D-ribosyl)-L-aspartyl-[protein] + nicotinamide. The catalysed reaction is L-glutamyl-[protein] + NAD(+) = 5-O-(ADP-D-ribosyl)-L-glutamyl-[protein] + nicotinamide. In terms of biological role, involved in the base excision repair (BER) pathway, by catalyzing the poly(ADP-ribosyl)ation of a limited number of acceptor proteins involved in chromatin architecture and in DNA metabolism. This modification follows DNA damages and appears as an obligatory step in a detection/signaling pathway leading to the reparation of DNA strand breaks. The sequence is that of Poly [ADP-ribose] polymerase 2-A (PARP2-A) from Oryza sativa subsp. japonica (Rice).